The chain runs to 1134 residues: MMS19 nucleotide excision repair protein homolog (1134 aa).

HEAT repeat units lie at residues 959–998, 1002–1047, 1050–1089, and 1092–1130; these read QRCF…NVPV, LDNT…KGQQ, SDNA…LPHR, and YPFR…ITSG.

Belongs to the MET18/MMS19 family. In terms of assembly, part of a complex composed of AE7, CIA1, MMS19 and NAR1. Interacts with AE7.

It localises to the nucleus. It is found in the cytoplasm. Its function is as follows. May select specific target apoproteins to which a Fe-S cluster produced by the cytosolic iron-sulfur (Fe-S) protein assembly (CIA) pathway is transferred. This Arabidopsis thaliana (Mouse-ear cress) protein is MMS19 nucleotide excision repair protein homolog.